The following is a 782-amino-acid chain: Endonuclease MutS2 (782 aa).

Residue 336–343 (GPNTGGKT) participates in ATP binding. In terms of domain architecture, Smr spans 707 to 782 (LDLRGYRYED…GFGVTVATLK (76 aa)).

Belongs to the DNA mismatch repair MutS family. MutS2 subfamily. Homodimer. Binds to stalled ribosomes, contacting rRNA.

In terms of biological role, endonuclease that is involved in the suppression of homologous recombination and thus may have a key role in the control of bacterial genetic diversity. Its function is as follows. Acts as a ribosome collision sensor, splitting the ribosome into its 2 subunits. Detects stalled/collided 70S ribosomes which it binds and splits by an ATP-hydrolysis driven conformational change. Acts upstream of the ribosome quality control system (RQC), a ribosome-associated complex that mediates the extraction of incompletely synthesized nascent chains from stalled ribosomes and their subsequent degradation. Probably generates substrates for RQC. This is Endonuclease MutS2 from Staphylococcus aureus (strain bovine RF122 / ET3-1).